We begin with the raw amino-acid sequence, 382 residues long: MSLDWMPREHGLKNHSRHTEQWWGTEAPCTVYEKRPLKDPKGNVVPGLYSAWIRLNNPGQYNSYTTEMVKGVIAGFENSSTDREVVAVVFTGTGPNAFCTGGNTKEYSEYYSMRPEEYGSYMELFNNMVDSILMCKKPVICRVNGMRVAGGQEIGTATDITVSSDLAIFGQAGPRHGSAPVGGASDFLPWFLSIEDAMWNCVSCEMWSAYKMKAKNLISKALPVLKDDKGNWVRNPQVYTDTYVKDGEIVYGEPKTGEEAKQARAWVNEKLKNNDYDFSLIDAEVDRIVWVFANLFPGCLMKSIDGIRQKKKFWWDQIKNDHRYWLGTNMMGEAFLGFGAFNTKKITGKDTIDFIKNRQLIAEGALVDEAFMEQVLGKPLAK.

This sequence belongs to the enoyl-CoA hydratase/isomerase family. Homohexamer.

It carries out the reaction 6-oxocyclohex-1-ene-1-carbonyl-CoA + 2 H2O = 3-hydroxy-6-carboxyhexanoyl-CoA + H(+). Its pathway is aromatic compound metabolism; benzoyl-CoA degradation. Functionally, involved in the central benzoyl-CoA catabolism. Catalyzes the addition of one molecule of water to the double bond and the hydrolytic cleavage of C-C bond in the alicyclic ring, 6-oxocyclohex-1-ene-1-carbonyl-CoA (6-OCH-CoA) to yield 3-hydroxypimelyl-CoA. The protein is 6-oxocyclohex-1-ene-1-carbonyl-CoA hydrolase of Syntrophus aciditrophicus (strain SB).